An 885-amino-acid chain; its full sequence is Exosome complex component 10 (885 aa).

Residue Lys19 forms a Glycyl lysine isopeptide (Lys-Gly) (interchain with G-Cter in SUMO2) linkage. The region spanning 289 to 455 (HFISSLDELV…YIYDKMRLEM (167 aa)) is the 3'-5' exonuclease domain. Mg(2+) is bound by residues Asp313, Glu315, Asp371, and Asp440. The HRDC domain occupies 503–583 (NTQQLTAFQL…QQAREMPLLK (81 aa)). Residue Lys583 forms a Glycyl lysine isopeptide (Lys-Gly) (interchain with G-Cter in SUMO1); alternate linkage. Lys583 is covalently cross-linked (Glycyl lysine isopeptide (Lys-Gly) (interchain with G-Cter in SUMO2); alternate). Lys710 participates in a covalent cross-link: Glycyl lysine isopeptide (Lys-Gly) (interchain with G-Cter in SUMO2). 2 stretches are compositionally biased toward basic and acidic residues: residues 776–794 (AAKK…EQKQ) and 804–816 (KPKD…KEFT). The segment at 776–885 (AAKKRERATS…RGFRYNWPQR (110 aa)) is disordered. Ser821 carries the post-translational modification Phosphoserine. Glycyl lysine isopeptide (Lys-Gly) (interchain with G-Cter in SUMO2) cross-links involve residues Lys826, Lys833, and Lys859. Over residues 831–848 (NSKSKVSSQFDPNKQTPS) the composition is skewed to polar residues. Over residues 861-871 (SVGNKSMSFPT) the composition is skewed to polar residues. A Glycyl lysine isopeptide (Lys-Gly) (interchain with G-Cter in SUMO2) cross-link involves residue Lys873.

This sequence belongs to the exosome component 10/RRP6 family. In terms of assembly, component of the RNA exosome complex. The catalytically inactive RNA exosome core complex (Exo-9) associates with the catalytic subunit EXOSC10/RRP6 (via its N-terminus). Exo-9 may associate with DIS3 to form the nucleolar exosome complex, or DIS3L to form the cytoplasmic exosome complex. The RNA exosome complex interacts with cofactors C1D/RRP47, MPHOSPH6/MPP6 and MTREX/MTR4. Interacts with MTREX; the interaction with MTREX mediates the association of MTREX with nuclear RNA exosomes. Part of the small subunit (SSU) processome, composed of more than 70 proteins and the RNA chaperone small nucleolar RNA (snoRNA) U3. Interacts with ALYREF/THOC4. Interacts with DHX36; this interaction occurs in a RNase-insensitive manner. Interacts with NRDE2. Interacts (via C-terminus) with USP36 (via C-terminus); the interaction is facilitated by the association with RNA and promotes sumoylation of EXOSC10. It depends on Mg(2+) as a cofactor. Sumoylated by USP36; sumoylation does not significantly affect EXOSC10 nucleolar localization and association with core exosome and USP36, but regulates the nucleolar RNA exosome activity in rRNA processing by promoting binding of EXOSC10 to pre-rRNAs. Effects of sumoylation on EXOSC10 levels vary between different studies. Sumoylation of EXOSC10 is required for the modulation of EXOSC10 effects on cellular protein translation and cell proliferation. Sumoylation is promoted by mild hypothermia.

The protein resides in the cytoplasm. It is found in the nucleus. Its subcellular location is the nucleolus. It localises to the nucleoplasm. Arginine-rich dipeptide repeat proteins expressed from C9orf72-derived repeat RNA interact with EXOSC10 and inhibit its ability to promote degradation of this RNA. Catalytic component of the RNA exosome complex which has 3'-&gt;5' exoribonuclease activity and participates in a multitude of cellular RNA processing and degradation events. In the nucleus, the RNA exosome complex is involved in proper maturation of stable RNA species such as rRNA, snRNA and snoRNA, in the elimination of RNA processing by-products and non-coding 'pervasive' transcripts, such as antisense RNA species and promoter-upstream transcripts (PROMPTs), and of mRNAs with processing defects, thereby limiting or excluding their export to the cytoplasm. Part of the small subunit (SSU) processome, first precursor of the small eukaryotic ribosomal subunit. During the assembly of the SSU processome in the nucleolus, many ribosome biogenesis factors, an RNA chaperone and ribosomal proteins associate with the nascent pre-rRNA and work in concert to generate RNA folding, modifications, rearrangements and cleavage as well as targeted degradation of pre-ribosomal RNA by the RNA exosome. The RNA exosome may be involved in Ig class switch recombination (CSR) and/or Ig variable region somatic hypermutation (SHM) by targeting AICDA deamination activity to transcribed dsDNA substrates. In the cytoplasm, the RNA exosome complex is involved in general mRNA turnover and specifically degrades inherently unstable mRNAs containing AU-rich elements (AREs) within their 3' untranslated regions, and in RNA surveillance pathways, preventing translation of aberrant mRNAs. It seems to be involved in degradation of histone mRNA. EXOSC10 is required for nucleolar localization of C1D and probably mediates the association of MTREX, C1D and MPHOSPH6 with the RNA exosome involved in the maturation of 5.8S rRNA. Plays a role in the recruitment of replication protein A complex (RPA) and RAD51 to DNA double-strand breaks caused by irradiation, contributing to DNA repair by homologous recombination. Regulates levels of damage-induced RNAs in order to prevent DNA-RNA hybrid formation at DNA double-strand breaks and limit DNA end resection after damage. Plays a role in oocyte development, maturation and survival. Required for normal testis development and mitotic division of spermatogonia. Plays a role in proper embryo development. Required for global protein translation. Required for cell proliferation. Regulates metabolism of C9orf72-derived repeat RNA that can be translated into toxic dipeptide repeat proteins. The protein is Exosome complex component 10 of Homo sapiens (Human).